The primary structure comprises 151 residues: Transcriptional regulator MraZ (151 aa).

SpoVT-AbrB domains lie at 5-52 (ATAV…PLDE) and 81-124 (ATEC…SDVE).

Belongs to the MraZ family. Forms oligomers.

It is found in the cytoplasm. Its subcellular location is the nucleoid. The sequence is that of Transcriptional regulator MraZ from Haemophilus influenzae (strain 86-028NP).